We begin with the raw amino-acid sequence, 291 residues long: Glycolipid transfer protein domain-containing protein 2 (291 aa).

A glycan (N-linked (GlcNAc...) asparagine) is linked at N276.

This sequence belongs to the GLTP family.

This Homo sapiens (Human) protein is Glycolipid transfer protein domain-containing protein 2 (GLTPD2).